The primary structure comprises 261 residues: Cytochrome c oxidase subunit 3 (261 aa).

At 1-15 (MTHQTHAYHMVNPSP) the chain is on the mitochondrial matrix side. Residues 16 to 34 (WPLTGAMSALLLTSGLIMW) form a helical membrane-spanning segment. Over 35–40 (FHFNSY) the chain is Mitochondrial intermembrane. Residues 41–66 (TLLLLGLLTNLISSYQWWRDIVREGT) form a helical membrane-spanning segment. At 67 to 72 (YQGHHT) the chain is on the mitochondrial matrix side. A helical transmembrane segment spans residues 73–105 (KIVQKGLRYGMILFIISEVFFFLGFFWAFYHSS). The Mitochondrial intermembrane segment spans residues 106–128 (LAPTPELGGCWPPTGISPLNPLE). A helical transmembrane segment spans residues 129-152 (VPLLNTSILLASGVSITWAHHSLM). Residues 153 to 155 (EGN) lie on the Mitochondrial matrix side of the membrane. A helical membrane pass occupies residues 156 to 183 (RKQMLQALTITIALGLYFTALQAMEYYE). The Mitochondrial intermembrane segment spans residues 184 to 190 (ASFTISD). Residues 191-223 (GVYGSTFFVATGFHGLHVIIGTTFLITCLVRQT) form a helical membrane-spanning segment. The Mitochondrial matrix portion of the chain corresponds to 224–232 (LYHFTSNHH). A helical transmembrane segment spans residues 233–256 (FGFEAAAWYWHFVDVVWLFLYVSI). The Mitochondrial intermembrane portion of the chain corresponds to 257–261 (YWWGS).

It belongs to the cytochrome c oxidase subunit 3 family. As to quaternary structure, component of the cytochrome c oxidase (complex IV, CIV), a multisubunit enzyme composed of 14 subunits. The complex is composed of a catalytic core of 3 subunits MT-CO1, MT-CO2 and MT-CO3, encoded in the mitochondrial DNA, and 11 supernumerary subunits COX4I, COX5A, COX5B, COX6A, COX6B, COX6C, COX7A, COX7B, COX7C, COX8 and NDUFA4, which are encoded in the nuclear genome. The complex exists as a monomer or a dimer and forms supercomplexes (SCs) in the inner mitochondrial membrane with NADH-ubiquinone oxidoreductase (complex I, CI) and ubiquinol-cytochrome c oxidoreductase (cytochrome b-c1 complex, complex III, CIII), resulting in different assemblies (supercomplex SCI(1)III(2)IV(1) and megacomplex MCI(2)III(2)IV(2)).

The protein resides in the mitochondrion inner membrane. It carries out the reaction 4 Fe(II)-[cytochrome c] + O2 + 8 H(+)(in) = 4 Fe(III)-[cytochrome c] + 2 H2O + 4 H(+)(out). Functionally, component of the cytochrome c oxidase, the last enzyme in the mitochondrial electron transport chain which drives oxidative phosphorylation. The respiratory chain contains 3 multisubunit complexes succinate dehydrogenase (complex II, CII), ubiquinol-cytochrome c oxidoreductase (cytochrome b-c1 complex, complex III, CIII) and cytochrome c oxidase (complex IV, CIV), that cooperate to transfer electrons derived from NADH and succinate to molecular oxygen, creating an electrochemical gradient over the inner membrane that drives transmembrane transport and the ATP synthase. Cytochrome c oxidase is the component of the respiratory chain that catalyzes the reduction of oxygen to water. Electrons originating from reduced cytochrome c in the intermembrane space (IMS) are transferred via the dinuclear copper A center (CU(A)) of subunit 2 and heme A of subunit 1 to the active site in subunit 1, a binuclear center (BNC) formed by heme A3 and copper B (CU(B)). The BNC reduces molecular oxygen to 2 water molecules using 4 electrons from cytochrome c in the IMS and 4 protons from the mitochondrial matrix. The sequence is that of Cytochrome c oxidase subunit 3 (MT-CO3) from Ornithorhynchus anatinus (Duckbill platypus).